The following is a 467-amino-acid chain: UDP-N-acetylmuramoylalanine--D-glutamate ligase (467 aa).

121–127 (GTNGKST) is an ATP binding site.

Belongs to the MurCDEF family.

It localises to the cytoplasm. It catalyses the reaction UDP-N-acetyl-alpha-D-muramoyl-L-alanine + D-glutamate + ATP = UDP-N-acetyl-alpha-D-muramoyl-L-alanyl-D-glutamate + ADP + phosphate + H(+). Its pathway is cell wall biogenesis; peptidoglycan biosynthesis. Cell wall formation. Catalyzes the addition of glutamate to the nucleotide precursor UDP-N-acetylmuramoyl-L-alanine (UMA). The polypeptide is UDP-N-acetylmuramoylalanine--D-glutamate ligase (Brucella suis biovar 1 (strain 1330)).